The following is a 581-amino-acid chain: 2-isopropylmalate synthase (581 aa).

The region spanning Pro32 to Lys306 is the Pyruvate carboxyltransferase domain. Mg(2+) is bound by residues Asp41, His245, His247, and Asn281. The segment at Arg455–Val581 is regulatory domain.

Belongs to the alpha-IPM synthase/homocitrate synthase family. LeuA type 2 subfamily. In terms of assembly, homodimer. Mg(2+) serves as cofactor.

The protein localises to the cytoplasm. The catalysed reaction is 3-methyl-2-oxobutanoate + acetyl-CoA + H2O = (2S)-2-isopropylmalate + CoA + H(+). It participates in amino-acid biosynthesis; L-leucine biosynthesis; L-leucine from 3-methyl-2-oxobutanoate: step 1/4. Catalyzes the condensation of the acetyl group of acetyl-CoA with 3-methyl-2-oxobutanoate (2-ketoisovalerate) to form 3-carboxy-3-hydroxy-4-methylpentanoate (2-isopropylmalate). This is 2-isopropylmalate synthase from Corynebacterium efficiens (strain DSM 44549 / YS-314 / AJ 12310 / JCM 11189 / NBRC 100395).